The following is a 331-amino-acid chain: Phosphoribosylformylglycinamidine cyclo-ligase (331 aa).

Belongs to the AIR synthase family.

Its subcellular location is the cytoplasm. The catalysed reaction is 2-formamido-N(1)-(5-O-phospho-beta-D-ribosyl)acetamidine + ATP = 5-amino-1-(5-phospho-beta-D-ribosyl)imidazole + ADP + phosphate + H(+). It functions in the pathway purine metabolism; IMP biosynthesis via de novo pathway; 5-amino-1-(5-phospho-D-ribosyl)imidazole from N(2)-formyl-N(1)-(5-phospho-D-ribosyl)glycinamide: step 2/2. The chain is Phosphoribosylformylglycinamidine cyclo-ligase from Clostridium kluyveri (strain NBRC 12016).